A 188-amino-acid polypeptide reads, in one-letter code: MEERNEQVVEEVKEAQVEEAVTPENSEETVEEKSEAALLQEKVDELQAKLTETEGRTLRLQADFENYKRRVQMDKQAAEKYRAQSLVSDILPALDNFERAMQVEATDEQTKSLLQGMEMVHRQLLEALNKEGVEVIEAVGKQFDPNEHQAIMQVEDSEFESNAVVEEFQKGYKLKDRVIRPSMVKVNQ.

The span at 1–16 shows a compositional bias: basic and acidic residues; that stretch reads MEERNEQVVEEVKEAQ. The disordered stretch occupies residues 1–31; it reads MEERNEQVVEEVKEAQVEEAVTPENSEETVE.

This sequence belongs to the GrpE family. Homodimer.

It localises to the cytoplasm. Functionally, participates actively in the response to hyperosmotic and heat shock by preventing the aggregation of stress-denatured proteins, in association with DnaK and GrpE. It is the nucleotide exchange factor for DnaK and may function as a thermosensor. Unfolded proteins bind initially to DnaJ; upon interaction with the DnaJ-bound protein, DnaK hydrolyzes its bound ATP, resulting in the formation of a stable complex. GrpE releases ADP from DnaK; ATP binding to DnaK triggers the release of the substrate protein, thus completing the reaction cycle. Several rounds of ATP-dependent interactions between DnaJ, DnaK and GrpE are required for fully efficient folding. The protein is Protein GrpE of Bacillus anthracis.